The chain runs to 807 residues: Spondin-1 (807 aa).

A signal peptide spans 1 to 28; sequence MRLSPVSLRLSRGPALLALALPLAAALA. The Reelin domain maps to 29 to 194; sequence FSDETLDKVT…DPTLDGVTDR (166 aa). Cystine bridges form between C44–C128, C156–C182, C199–C336, C200–C340, C202–C415, C443–C480, C454–C489, C459–C494, C502–C538, C513–C517, C548–C554, C559–C595, C570–C574, C605–C610, C615–C650, C626–C630, and C660–C665. The Spondin domain occupies 195–388; sequence PILDCCACGT…LTSLDHPQSP (194 aa). Residue N214 is glycosylated (N-linked (GlcNAc...) asparagine). Positions 325, 354, and 358 each coordinate Ca(2+). TSP type-1 domains lie at 442-495, 501-555, 558-611, 614-666, and 668-721; these read TCIY…PGCS, TCTM…EECS, SCLV…PECH, PCLL…PECP, and DCEL…RKCL. The N-linked (GlcNAc...) asparagine glycan is linked to N681. Residues 732–746 show a composition bias toward basic and acidic residues; it reads REARESRRSEQLREE. The disordered stretch occupies residues 732–752; sequence REARESRRSEQLREESDGEQF. The region spanning 754-806 is the TSP type-1 6 domain; sequence GCRMRPWTAWSECTKLCGGGIQERYMTVKKRFKSSQFTSCKDKKEIRACNVHP.

Binds to the central extracellular domain of APP and inhibits beta-secretase cleavage of APP.

It is found in the secreted. The protein localises to the extracellular space. Its subcellular location is the extracellular matrix. Its function is as follows. Cell adhesion protein that promotes the attachment of spinal cord and sensory neuron cells and the outgrowth of neurites in vitro. May contribute to the growth and guidance of axons in both the spinal cord and the PNS. This Mus musculus (Mouse) protein is Spondin-1 (Spon1).